The primary structure comprises 304 residues: Probable intron-encoded endonuclease 1 (304 aa).

The GIY-YIG domain occupies 84–175; it reads DKGGIYSFIN…RFNFDNLYNF (92 aa).

To endonucleases of group I introns of fungi and phage.

The protein resides in the mitochondrion. Functionally, mitochondrial DNA endonuclease involved in intron homing. The chain is Probable intron-encoded endonuclease 1 from Neurospora crassa (strain ATCC 24698 / 74-OR23-1A / CBS 708.71 / DSM 1257 / FGSC 987).